The following is a 275-amino-acid chain: Rhamnulose-1-phosphate aldolase (275 aa).

E117 is a catalytic residue. Positions 141, 143, and 212 each coordinate Zn(2+).

Belongs to the aldolase class II family. RhaD subfamily. In terms of assembly, homotetramer. Requires Zn(2+) as cofactor.

Its subcellular location is the cytoplasm. The catalysed reaction is L-rhamnulose 1-phosphate = (S)-lactaldehyde + dihydroxyacetone phosphate. Its pathway is carbohydrate degradation; L-rhamnose degradation; glycerone phosphate from L-rhamnose: step 3/3. Its function is as follows. Catalyzes the reversible cleavage of L-rhamnulose-1-phosphate to dihydroxyacetone phosphate (DHAP) and L-lactaldehyde. The polypeptide is Rhamnulose-1-phosphate aldolase (Salmonella paratyphi C (strain RKS4594)).